The following is an 873-amino-acid chain: Bifunctional uridylyltransferase/uridylyl-removing enzyme (873 aa).

The uridylyltransferase stretch occupies residues Met1–Ile332. The segment at Leu333 to Thr692 is uridylyl-removing. Residues Val451–Leu573 enclose the HD domain. ACT domains follow at residues Glu693–Arg777 and Leu800–Pro873.

Belongs to the GlnD family. Mg(2+) is required as a cofactor.

The enzyme catalyses [protein-PII]-L-tyrosine + UTP = [protein-PII]-uridylyl-L-tyrosine + diphosphate. It catalyses the reaction [protein-PII]-uridylyl-L-tyrosine + H2O = [protein-PII]-L-tyrosine + UMP + H(+). Uridylyltransferase (UTase) activity is inhibited by glutamine, while glutamine activates uridylyl-removing (UR) activity. In terms of biological role, modifies, by uridylylation and deuridylylation, the PII regulatory proteins (GlnB and homologs), in response to the nitrogen status of the cell that GlnD senses through the glutamine level. Under low glutamine levels, catalyzes the conversion of the PII proteins and UTP to PII-UMP and PPi, while under higher glutamine levels, GlnD hydrolyzes PII-UMP to PII and UMP (deuridylylation). Thus, controls uridylylation state and activity of the PII proteins, and plays an important role in the regulation of nitrogen assimilation and metabolism. This Vibrio atlanticus (strain LGP32) (Vibrio splendidus (strain Mel32)) protein is Bifunctional uridylyltransferase/uridylyl-removing enzyme.